Reading from the N-terminus, the 124-residue chain is Superoxide reductase (124 aa).

Glu-14, His-16, His-41, His-47, Cys-111, and His-114 together coordinate Fe cation.

It belongs to the desulfoferrodoxin family. Homotetramer. Requires Fe cation as cofactor.

The catalysed reaction is reduced [rubredoxin] + superoxide + 2 H(+) = oxidized [rubredoxin] + H2O2. Its function is as follows. Uses electrons from reduced NADP, by way of rubredoxin and an oxidoreductase, to catalyze the reduction of superoxide to hydrogen peroxide. The sequence is that of Superoxide reductase (sorA) from Pyrococcus furiosus (strain ATCC 43587 / DSM 3638 / JCM 8422 / Vc1).